Reading from the N-terminus, the 246-residue chain is DNA repair protein RecO (246 aa).

The protein belongs to the RecO family.

In terms of biological role, involved in DNA repair and RecF pathway recombination. The chain is DNA repair protein RecO from Bifidobacterium adolescentis (strain ATCC 15703 / DSM 20083 / NCTC 11814 / E194a).